Here is a 521-residue protein sequence, read N- to C-terminus: MFESLSNRLTGVIQGLRGKGRLTDADIEATTREIRLALFEADVSLPVVRAFVHRIKERARGTEVSAALNPAQQIVKIVNEELIGILGGETRQLAFAKTPPTVVMLAGLQGSGKTTLAGKLAVRLRRQGHTPLLVACDLQRPAAVNQLQVVGERAGVPVFAPHPGASPDSGPGDPVAVASAGLVEARAKHFDVVIVDTAGRLGIDDELMAQAGAIREAINPDEVLFVLDAMIGQDAVTTAAAFGAGVGFTGVVLTKLDGDARGGAALSVREVTGVPILFATTGEKLDDFDVFHPDRMASRILGMGDVLSLIEQAEQVFDAEQAEAAAAKIVAGELTLEDFLEQMLAVRKMGLIGNLLGMLPGAGQVKEVLEQVDDKQLDRLQAIIRGMTPQERADPKIINASRRLRIANGSGVTVSEVNQLVDRFFEARKMMSSVLGGMGIPGMGRKSATRKSKGGKGKKRARGPTSPKVRSPFGPARPGMPDMMNMPPSFPDLSQMPDGLNELPPGLAAFDLSKLKFPGKT.

GTP contacts are provided by residues 107–114 (GLQGSGKT), 196–200 (DTAGR), and 254–257 (TKLD). A disordered region spans residues 436 to 505 (GGMGIPGMGR…MPDGLNELPP (70 aa)). Over residues 447-462 (SATRKSKGGKGKKRAR) the composition is skewed to basic residues.

Belongs to the GTP-binding SRP family. SRP54 subfamily. Part of the signal recognition particle protein translocation system, which is composed of SRP and FtsY.

It localises to the cytoplasm. It carries out the reaction GTP + H2O = GDP + phosphate + H(+). Functionally, involved in targeting and insertion of nascent membrane proteins into the cytoplasmic membrane. Binds to the hydrophobic signal sequence of the ribosome-nascent chain (RNC) as it emerges from the ribosomes. The SRP-RNC complex is then targeted to the cytoplasmic membrane where it interacts with the SRP receptor FtsY. This is Signal recognition particle protein from Mycobacterium leprae (strain TN).